We begin with the raw amino-acid sequence, 443 residues long: Protein SCAR (443 aa).

An interaction with brk1 and abiA region spans residues 1 to 96 (MVLITRYLPS…DYHRNTSIDT (96 aa)). Residues 166–201 (VAEQQKLHEEARQRKRERREARLKKKGEKNEVEVKK) are a coiled coil. Disordered stretches follow at residues 176–197 (ARQR…KNEV) and 220–386 (INIE…RSDL). A compositionally biased stretch (basic residues) spans 178–192 (QRKRERREARLKKKG). Residues 221-252 (NIESPHTSSPQIQHQSNNTATPQHTTQHFGTN) show a composition bias toward polar residues. Low complexity-rich tracts occupy residues 263–277 (SQSS…INSY) and 285–305 (NTST…TGFN). Pro residues predominate over residues 306–323 (TPPPPMSNNNNMPPPPPM). Polar residues predominate over residues 324-338 (QQNGGAANNRLSVHN). Residues 346–365 (PAPPPPPPPPSAPAPPPPPM) are compositionally biased toward pro residues. In terms of domain architecture, WH2 spans 382-399 (ARSDLLSSIMQGMALKPA).

It belongs to the SCAR/WAVE family. In terms of assembly, part of a Scar/WAVE complex containing brk1, scrA, abiA, pirA and napA. Interacts with brk1 and abiA.

The protein localises to the cytoplasm. It is found in the cytoskeleton. Its subcellular location is the cell projection. The protein resides in the pseudopodium tip. It localises to the filopodium tip. Involved in regulation of actin and microtubule organization. Regulates phagocytosis and macropinocytosis. The chain is Protein SCAR (scrA) from Dictyostelium discoideum (Social amoeba).